The primary structure comprises 655 residues: Peroxidase skpo-1 (655 aa).

An N-terminal signal peptide occupies residues 1-19 (MKSLLFSILLIYLIQLVRS). In terms of domain architecture, ShKT spans 22 to 56 (CTDKHIHCFFWSQEGECEVNPRWMKKHCQKACGTC). Disulfide bonds link cysteine 22/cysteine 56, cysteine 29/cysteine 49, cysteine 38/cysteine 53, and cysteine 133/cysteine 150. The active-site Proton acceptor is the histidine 222. Residue histidine 428 participates in heme b binding. Intrachain disulfides connect cysteine 520–cysteine 576 and cysteine 617–cysteine 642.

It belongs to the peroxidase family. XPO subfamily. Requires heme b as cofactor. Exclusively expressed in hypodermis.

The catalysed reaction is 2 a phenolic donor + H2O2 = 2 a phenolic radical donor + 2 H2O. Its function is as follows. Involved in hypodermal immune response against some types of bacterial infection. Probably utilizes H(2)O(2) produced by the NADPH oxidase bli-3. May play a role in cuticule biosynthesis. The sequence is that of Peroxidase skpo-1 from Caenorhabditis elegans.